We begin with the raw amino-acid sequence, 676 residues long: MTQLTENTDELHSIRLAIDPNLITLPIGSKSTSPHSNSTSDGNPESHNTENEEVDNKAGSLPPEQFSNNSAKLIVNPYEKYGRMSLGQLIPLISQQRGPNFKFADINEDILKQELAIENDNGKQESKDDTKAEDGIDTMDIDQNDNSEANTNDIGYNEWSNEPKEDTGILDNTQDTNINGEMESQLTQEEFNKIRKVMLEHINMAMNESSLAMEFVSLLLSPVRESTAVSSMSPFLKKTVNPGSLNSEKVKMPAVSRRDKLSLSILSRGWKLRALNEARAILKKNFTEISSSLKQEHHYWSSIAYNISNKDVLFKIRDKQTTKRSLGLKYGYEDSGSTFRNDRGTAILRGTDEANGLELIPLTLGRTSTVGSVYKGGKFLRVRIFTKIESEGDYILSGESSLDKLFKNHSENSDSKNDDVRLQISKLKFFIFEQELMHQLKKECAYLISYGVTVENEHKIVIELPNEKFEIEYLSLDDDSVVNHEQDAPKANDRRANLMLVTLRMLLIVIYKKNLRQKMVSNTRKHIASTEKDILLIRPLLGKMRHSNHKKLIRKILKECVLEVVPDTELQERSIQSLDKEDFETFDLQDAHIVKLTKDINAFRNVLDVGKTEFTIDMKQSGKLSLILESPNYCNAQVSIKYDNQTSNTHFNTVSTEFKEVEEFLHFLISTYVNPE.

2 disordered regions span residues 27–68 (IGSK…QFSN) and 117–176 (IEND…TQDT). Residues 29-40 (SKSTSPHSNSTS) show a composition bias toward low complexity. Composition is skewed to basic and acidic residues over residues 47 to 56 (HNTENEEVDN) and 120 to 134 (DNGK…KAED). Residues 135 to 145 (GIDTMDIDQND) show a composition bias toward acidic residues. The segment covering 146-160 (NSEANTNDIGYNEWS) has biased composition (polar residues).

The protein belongs to the Mediator complex subunit 17 family. As to quaternary structure, component of the Mediator complex.

It localises to the nucleus. Component of the Mediator complex, a coactivator involved in the regulated transcription of nearly all RNA polymerase II-dependent genes. Mediator functions as a bridge to convey information from gene-specific regulatory proteins to the basal RNA polymerase II transcription machinery. Mediator is recruited to promoters by direct interactions with regulatory proteins and serves as a scaffold for the assembly of a functional preinitiation complex with RNA polymerase II and the general transcription factors. This is Mediator of RNA polymerase II transcription subunit 17 (SRB4) from Candida glabrata (strain ATCC 2001 / BCRC 20586 / JCM 3761 / NBRC 0622 / NRRL Y-65 / CBS 138) (Yeast).